The chain runs to 77 residues: Large ribosomal subunit protein uL29 (77 aa).

It belongs to the universal ribosomal protein uL29 family.

This chain is Large ribosomal subunit protein uL29, found in Mycolicibacterium gilvum (strain PYR-GCK) (Mycobacterium gilvum (strain PYR-GCK)).